We begin with the raw amino-acid sequence, 358 residues long: Probable protein phosphatase 2C 34 (358 aa).

Residues 62-349 form the PPM-type phosphatase domain; it reads LASVFSRRGE…DDISAVCLFF (288 aa). Aspartate 98, glycine 99, aspartate 294, and aspartate 340 together coordinate Mn(2+).

Belongs to the PP2C family. Mg(2+) serves as cofactor. It depends on Mn(2+) as a cofactor.

It carries out the reaction O-phospho-L-seryl-[protein] + H2O = L-seryl-[protein] + phosphate. It catalyses the reaction O-phospho-L-threonyl-[protein] + H2O = L-threonyl-[protein] + phosphate. The chain is Probable protein phosphatase 2C 34 from Arabidopsis thaliana (Mouse-ear cress).